Here is a 520-residue protein sequence, read N- to C-terminus: Glutamate--cysteine ligase (520 aa).

This sequence belongs to the glutamate--cysteine ligase type 1 family. Type 1 subfamily.

The catalysed reaction is L-cysteine + L-glutamate + ATP = gamma-L-glutamyl-L-cysteine + ADP + phosphate + H(+). Its pathway is sulfur metabolism; glutathione biosynthesis; glutathione from L-cysteine and L-glutamate: step 1/2. In Leptospira interrogans serogroup Icterohaemorrhagiae serovar copenhageni (strain Fiocruz L1-130), this protein is Glutamate--cysteine ligase.